Consider the following 129-residue polypeptide: LEM domain-containing protein 1 (129 aa).

The region spanning 1–45 (MVDVKCLSDYELHKHLMKLGFTPGPILPSTRKTYEKKLVQLLASP) is the LEM domain. Residues 45 to 129 (PPWKPPVMKR…RAPRTTSHGA (85 aa)) form a disordered region. Residues 83–97 (SLKKTTLDATRDPRA) are compositionally biased toward basic and acidic residues.

In Mus musculus (Mouse), this protein is LEM domain-containing protein 1 (Lemd1).